Here is a 231-residue protein sequence, read N- to C-terminus: Cytidylate kinase (231 aa).

Residue glycine 18–serine 26 participates in ATP binding.

The protein belongs to the cytidylate kinase family. Type 1 subfamily.

The protein resides in the cytoplasm. The catalysed reaction is CMP + ATP = CDP + ADP. It carries out the reaction dCMP + ATP = dCDP + ADP. The chain is Cytidylate kinase from Streptomyces avermitilis (strain ATCC 31267 / DSM 46492 / JCM 5070 / NBRC 14893 / NCIMB 12804 / NRRL 8165 / MA-4680).